A 283-amino-acid polypeptide reads, in one-letter code: ATP phosphoribosyltransferase (283 aa).

This sequence belongs to the ATP phosphoribosyltransferase family. Long subfamily. It depends on Mg(2+) as a cofactor.

The protein localises to the cytoplasm. The enzyme catalyses 1-(5-phospho-beta-D-ribosyl)-ATP + diphosphate = 5-phospho-alpha-D-ribose 1-diphosphate + ATP. Its pathway is amino-acid biosynthesis; L-histidine biosynthesis; L-histidine from 5-phospho-alpha-D-ribose 1-diphosphate: step 1/9. With respect to regulation, feedback inhibited by histidine. Functionally, catalyzes the condensation of ATP and 5-phosphoribose 1-diphosphate to form N'-(5'-phosphoribosyl)-ATP (PR-ATP). Has a crucial role in the pathway because the rate of histidine biosynthesis seems to be controlled primarily by regulation of HisG enzymatic activity. This is ATP phosphoribosyltransferase from Nocardia farcinica (strain IFM 10152).